We begin with the raw amino-acid sequence, 484 residues long: Neuronal acetylcholine receptor subunit alpha-9 (484 aa).

The first 27 residues, 1-27 (MKRNNLSSFYVSLWLLFTATMLQAVES), serve as a signal peptide directing secretion. Residues 28–240 (AKGKYAQMLF…FTLILKRKSS (213 aa)) are Extracellular-facing. N-linked (GlcNAc...) asparagine glycosylation occurs at Asn59. Cys157 and Cys171 form a disulfide bridge. An N-linked (GlcNAc...) asparagine glycan is attached at Asn172. Na(+) contacts are provided by Ser193 and Asp195. Residues Cys221 and Cys222 are joined by a disulfide bond. A run of 3 helical transmembrane segments spans residues 241–261 (FYIF…PLGF), 271–291 (VSLG…VAEI), and 305–325 (YIAT…IMNV). Residues 326–462 (HHCGSEAKPV…WKKVAKVMDR (137 aa)) lie on the Cytoplasmic side of the membrane. The interval 364-395 (RREKEQEHRLEGGDMCRGGDGKSHLSSRNDDS) is disordered. The chain crosses the membrane as a helical span at residues 463–483 (FFMWIFFIMVFFMSVLIIGKA).

This sequence belongs to the ligand-gated ion channel (TC 1.A.9) family. Acetylcholine receptor (TC 1.A.9.1) subfamily. Alpha-9/CHRNA9 sub-subfamily. In terms of assembly, forms homo- or heteropentameric channels in conjunction with CHRNA10. The native outer hair cell receptor is composed of CHRNA9:CHRNA10 heterooligomers. Found in the stoichiometric form (CHRNA9)2:(CHRNA10)3. Expressed in hair cells of the cochlea (at protein level). Expressed in hair cells of the cochlea.

It localises to the synaptic cell membrane. Its subcellular location is the cell membrane. It catalyses the reaction Ca(2+)(in) = Ca(2+)(out). It carries out the reaction K(+)(in) = K(+)(out). The enzyme catalyses Na(+)(in) = Na(+)(out). The catalysed reaction is Mg(2+)(in) = Mg(2+)(out). With respect to regulation, activated by a myriad of ligands such as acetylcholine. AChR activity is inhibited by the antagonist alpha-conotoxins RgIA and GeXXA, small disulfide-constrained peptides from cone snails. Functionally, component of neuronal acetylcholine receptors (nAChRs) that function as pentameric, ligand-gated cation channels with high calcium permeability among other activities. nAChRs are excitatory neurotrasnmitter receptors formed by a collection of nAChR subunits known to mediate synaptic transmission in the nervous system and the neuromuscular junction. Each nAchR subunit confers differential attributes to channel properties, including activation, deactivation and desensitization kinetics, pH sensitivity, cation permeability, and binding to allosteric modulators. Forms either homopentamers or heteropentamers with CHRNA10. Expressed in the inner ear, in sympathetic neurons and in other non-neuronal cells, such as skin keratinocytes and lymphocytes. The channel is permeable to a range of divalent cations including calcium, the influx of which may activate a potassium current which hyperpolarizes the cell membrane. The protein is Neuronal acetylcholine receptor subunit alpha-9 (CHRNA9) of Gallus gallus (Chicken).